We begin with the raw amino-acid sequence, 83 residues long: Urotensin-2 (83 aa).

Residues 49 to 71 (EVLLEKQSLLNPFSRVFGIRKQF) constitute a propeptide that is removed on maturation. An intrachain disulfide couples Cys-77 to Cys-82.

Belongs to the urotensin-2 family.

Its subcellular location is the secreted. Urotensin is found in the teleost caudal neurosecretory system. It has a suggested role in osmoregulation and as a corticotropin-releasing factor. The non-hormonal portion of this precursor may be a urotensin binding protein, urophysin. The protein is Urotensin-2 of Platichthys flesus (European flounder).